A 473-amino-acid chain; its full sequence is Laccase-3 (473 aa).

The N-terminal stretch at 1–21 (MSFSSLRRALVFLGACSSALA) is a signal peptide. Plastocyanin-like domains are found at residues 23–148 (IGPV…LVIY) and 160–298 (VDDE…ILRY). Asn75 carries N-linked (GlcNAc...) asparagine glycosylation. The Cu cation site is built by His85, His87, His130, and His132. 2 cysteine pairs are disulfide-bonded: Cys106–Cys462 and Cys138–Cys221. N-linked (GlcNAc...) asparagine glycans are attached at residues Asn226, Asn283, Asn309, Asn346, Asn350, and Asn374. The Plastocyanin-like 3 domain maps to 365–444 (TVPVLLQILN…AGLAIVFAED (80 aa)). Residues His410, His413, His415, His426, Cys427, His428, and His432 each contribute to the Cu cation site. A glycan (N-linked (GlcNAc...) asparagine) is linked at Asn470.

The protein belongs to the multicopper oxidase family. Homodimer. Cu cation is required as a cofactor.

It localises to the secreted. It catalyses the reaction 4 hydroquinone + O2 = 4 benzosemiquinone + 2 H2O. Functionally, lignin degradation and detoxification of lignin-derived products. The protein is Laccase-3 (LCC3) of Trametes villosa (White-rot fungus).